The sequence spans 192 residues: Xanthine phosphoribosyltransferase (192 aa).

2 residues coordinate xanthine: leucine 20 and asparagine 27. Residue 128–132 (ANGDA) coordinates 5-phospho-alpha-D-ribose 1-diphosphate. Lysine 156 is a xanthine binding site.

It belongs to the purine/pyrimidine phosphoribosyltransferase family. Xpt subfamily. In terms of assembly, homodimer.

Its subcellular location is the cytoplasm. The enzyme catalyses XMP + diphosphate = xanthine + 5-phospho-alpha-D-ribose 1-diphosphate. Its pathway is purine metabolism; XMP biosynthesis via salvage pathway; XMP from xanthine: step 1/1. Its function is as follows. Converts the preformed base xanthine, a product of nucleic acid breakdown, to xanthosine 5'-monophosphate (XMP), so it can be reused for RNA or DNA synthesis. The polypeptide is Xanthine phosphoribosyltransferase (Staphylococcus aureus (strain MRSA252)).